We begin with the raw amino-acid sequence, 221 residues long: 7-cyano-7-deazaguanine synthase (221 aa).

10-20 contacts ATP; it reads LSGGLDSTTCM. The Zn(2+) site is built by cysteine 188, cysteine 196, cysteine 199, and cysteine 202.

Belongs to the QueC family. In terms of assembly, homodimer. Zn(2+) is required as a cofactor.

The enzyme catalyses 7-carboxy-7-deazaguanine + NH4(+) + ATP = 7-cyano-7-deazaguanine + ADP + phosphate + H2O + H(+). It participates in purine metabolism; 7-cyano-7-deazaguanine biosynthesis. Its function is as follows. Catalyzes the ATP-dependent conversion of 7-carboxy-7-deazaguanine (CDG) to 7-cyano-7-deazaguanine (preQ(0)). The polypeptide is 7-cyano-7-deazaguanine synthase (Oceanobacillus iheyensis (strain DSM 14371 / CIP 107618 / JCM 11309 / KCTC 3954 / HTE831)).